Here is a 371-residue protein sequence, read N- to C-terminus: Peptide chain release factor 2 (371 aa).

Gln252 is modified (N5-methylglutamine).

It belongs to the prokaryotic/mitochondrial release factor family. Methylated by PrmC. Methylation increases the termination efficiency of RF2.

Its subcellular location is the cytoplasm. Peptide chain release factor 2 directs the termination of translation in response to the peptide chain termination codons UGA and UAA. The chain is Peptide chain release factor 2 from Staphylococcus epidermidis (strain ATCC 35984 / DSM 28319 / BCRC 17069 / CCUG 31568 / BM 3577 / RP62A).